The chain runs to 232 residues: MTFKATVLTLYPEMFPGHLQYSLAGKALERGQWSLDPIQIREFATDRHRSVDDTPAGGGAGMVLKPDVLAAAIDHVSKGDTRPRLLMSPRGKPLSQNRVRELAAGDGAIIVCGRFEGVDQRVIEARGLEEVSIGDYILSGGEPAALTLLDAVVRILPGVMGNDLSGVHESFEGGLLEHPHYTRPQLWEGRDIPAILTSGNHAAIDKWRHEQALALTKERRPDLLEKTQAETK.

Residues glycine 113 and 133–138 (IGDYIL) each bind S-adenosyl-L-methionine.

Belongs to the RNA methyltransferase TrmD family. In terms of assembly, homodimer.

It localises to the cytoplasm. The enzyme catalyses guanosine(37) in tRNA + S-adenosyl-L-methionine = N(1)-methylguanosine(37) in tRNA + S-adenosyl-L-homocysteine + H(+). In terms of biological role, specifically methylates guanosine-37 in various tRNAs. The protein is tRNA (guanine-N(1)-)-methyltransferase (trmD) of Agrobacterium fabrum (strain C58 / ATCC 33970) (Agrobacterium tumefaciens (strain C58)).